Here is a 110-residue protein sequence, read N- to C-terminus: Non-specific lipid-transfer protein 4 (110 aa).

The signal sequence occupies residues 1 to 17; the sequence is CVVLVMCMVVIAPMAEG. 4 disulfide bridges follow: Cys21-Cys68, Cys31-Cys45, Cys46-Cys91, and Cys66-Cys105.

This sequence belongs to the plant LTP family.

Its function is as follows. Plant non-specific lipid-transfer proteins transfer phospholipids as well as galactolipids across membranes. May play a role in wax or cutin deposition in the cell walls of expanding epidermal cells and certain secretory tissues. This is Non-specific lipid-transfer protein 4 from Lens culinaris (Lentil).